A 123-amino-acid chain; its full sequence is MPTVNQLIRKPRQANVKRNKVPALQENPQKRGVCTRVYTTTPKKPNSALRKVAKIRLTNGFEVIGYIPGEGHNLQEHSVVMIRGGRVKDLPGVRYHIIRGVLDTQGVKNRKQRRSKYGAKRPK.

A 3-methylthioaspartic acid modification is found at Asp89.

Belongs to the universal ribosomal protein uS12 family. As to quaternary structure, part of the 30S ribosomal subunit. Contacts proteins S8 and S17. May interact with IF1 in the 30S initiation complex.

Its function is as follows. With S4 and S5 plays an important role in translational accuracy. Functionally, interacts with and stabilizes bases of the 16S rRNA that are involved in tRNA selection in the A site and with the mRNA backbone. Located at the interface of the 30S and 50S subunits, it traverses the body of the 30S subunit contacting proteins on the other side and probably holding the rRNA structure together. The combined cluster of proteins S8, S12 and S17 appears to hold together the shoulder and platform of the 30S subunit. This is Small ribosomal subunit protein uS12 from Rhizobium leguminosarum bv. trifolii (strain WSM2304).